The following is a 518-amino-acid chain: FAD-dependent monooxygenase tpcD (518 aa).

The signal sequence occupies residues 1–22 (MQLLGTLSWLYAIQASIGSSKA). N-linked (GlcNAc...) asparagine glycosylation occurs at asparagine 61. Positions 75-246 (QSAQPACLVH…TRFDLDVFQQ (172 aa)) constitute an FAD-binding PCMH-type domain. A Pros-8alpha-FAD histidine modification is found at histidine 112. Residues asparagine 163, asparagine 208, asparagine 216, and asparagine 346 are each glycosylated (N-linked (GlcNAc...) asparagine).

Belongs to the oxygen-dependent FAD-linked oxidoreductase family. Requires FAD as cofactor.

It functions in the pathway secondary metabolite biosynthesis; terpenoid biosynthesis. FAD-dependent monooxygenase; part of the gene cluster that mediates the biosynthesis of terpestacin. The bifunctional terpene synthase tpcA converts isopentenyl diphosphate (IPP) and dimethylallyl diphosphate (DMAPP) into the sesterterpene preterpestacin I. The C-terminal prenyltransferase (PT) domain of tpcA catalyzes formation of GFPP, whereas the N-terminal terpene cyclase (TC) domain catalyzes the cyclization of GFPP into preterpestacin I. The cytochrome P450 monooxygenase tpcB then hydroxylates preterpestacin I to yield 24-hydroxypreterpstacin I (renamed as preterpestacin II) whereas the cytochrome P450 monooxygenase tpcC further hydroxylates preterpestacin II to yield 16,17-dihydroxypreterpestacin II (renamed as preterpestacin III). Finally, the FAD-dependent monooxygenase tpcD converts preterpestacin III into terpestacin. The chain is FAD-dependent monooxygenase tpcD from Cochliobolus heterostrophus (strain C5 / ATCC 48332 / race O) (Southern corn leaf blight fungus).